The following is a 105-amino-acid chain: Nucleoid-associated protein SE_2306 (105 aa).

The disordered stretch occupies residues 1–40; the sequence is MRGGGNMQQMMKQMQKMQKKMAQEQEKLKEERVAGTAGGG. Low complexity predominate over residues 7 to 16; it reads MQQMMKQMQK. Residues 21 to 33 are compositionally biased toward basic and acidic residues; the sequence is MAQEQEKLKEERV.

Belongs to the YbaB/EbfC family. In terms of assembly, homodimer.

It is found in the cytoplasm. The protein localises to the nucleoid. Its function is as follows. Binds to DNA and alters its conformation. May be involved in regulation of gene expression, nucleoid organization and DNA protection. The polypeptide is Nucleoid-associated protein SE_2306 (Staphylococcus epidermidis (strain ATCC 12228 / FDA PCI 1200)).